Reading from the N-terminus, the 64-residue chain is Conotoxin Im11.1 (64 aa).

The signal sequence occupies residues 1 to 26 (MMFRLTSVSCFLLVIACLNLVVLTNA). 4 disulfides stabilise this stretch: cysteine 27/cysteine 41, cysteine 34/cysteine 46, cysteine 40/cysteine 50, and cysteine 45/cysteine 54. Asparagine 57 is subject to Asparagine amide. The propeptide occupies 61 to 64 (ATFQ).

It belongs to the conotoxin I2 superfamily. As to expression, expressed by the venom duct.

It is found in the secreted. In Conus imperialis (Imperial cone), this protein is Conotoxin Im11.1.